The sequence spans 93 residues: Acyl carrier protein AcpXL (93 aa).

The 87-residue stretch at 2–88 (STTFDKVAKI…NLCAKIDALV (87 aa)) folds into the Carrier domain. The residue at position 37 (S37) is an O-(pantetheine 4'-phosphoryl)serine.

4'-phosphopantetheine is transferred from CoA to a specific serine of apo-ACP by AcpS. This modification is essential for activity because fatty acids are bound in thioester linkage to the sulfhydryl of the prosthetic group.

Its subcellular location is the cytoplasm. It functions in the pathway glycolipid biosynthesis; KDO(2)-lipid A biosynthesis. Its function is as follows. Carrier of the growing fatty acid chain in fatty acid biosynthesis. Is involved in the transfer of long hydroxylated fatty acids to lipid A. This is Acyl carrier protein AcpXL (acpXL) from Mesorhizobium japonicum (strain LMG 29417 / CECT 9101 / MAFF 303099) (Mesorhizobium loti (strain MAFF 303099)).